A 60-amino-acid polypeptide reads, in one-letter code: Large ribosomal subunit protein bL32 (60 aa).

Basic residues predominate over residues 1–16; the sequence is MAVPRRKTSPSRRGMR. The tract at residues 1-60 is disordered; the sequence is MAVPRRKTSPSRRGMRRSADAIKRPTYVEDKDSGELRRPHHLDLKTGMYKGRQVLKKKDS. The span at 17 to 44 shows a compositional bias: basic and acidic residues; the sequence is RSADAIKRPTYVEDKDSGELRRPHHLDL.

The sequence is that of Large ribosomal subunit protein bL32 from Rhodopseudomonas palustris (strain ATCC BAA-98 / CGA009).